A 75-amino-acid chain; its full sequence is Porwaprin-b (75 aa).

The N-terminal stretch at 1-24 is a signal peptide; that stretch reads MSSGGLLLLLGLLTLWAELTPVSG. Residues 27–72 form the WAP domain; the sequence is RPVKPGLCPPRPQKPPCVKECKNDWSCRGEQKCCHYGCIYECRDPI. Disulfide bonds link C34-C60, C43-C64, C47-C59, and C53-C68.

Belongs to the venom waprin family. As to expression, expressed by the venom gland.

Its subcellular location is the secreted. Damages membranes of susceptible bacteria. Has no hemolytic activity. Not toxic to mice. Does not inhibit the proteinases elastase and cathepsin G. The polypeptide is Porwaprin-b (Pseudechis porphyriacus (Red-bellied black snake)).